Reading from the N-terminus, the 353-residue chain is E3 ubiquitin-protein ligase TRIM63 (353 aa).

Residues cysteine 23 to arginine 79 form an RING-type zinc finger. The interaction with TTN stretch occupies residues arginine 74 to alanine 218. The B box-type zinc-finger motif lies at glycine 117–leucine 159. Zn(2+) is bound by residues cysteine 122, histidine 125, cysteine 145, and histidine 151. Positions glutamate 207–glutamate 269 form a coiled coil. In terms of domain architecture, COS spans leucine 267–glycine 325. A compositionally biased stretch (acidic residues) spans threonine 326 to serine 344. Residues threonine 326–glutamine 353 are disordered.

In terms of assembly, homodimer. Homooligomer and heterooligomer. Interacts with SUMO2, titin/TTN and GMEB1. Interacts with TRIM54 and probably with TRIM55 and TNNI3. Forms a ternary complex with RACK1 and PRKCE. Interacts with CKM. In terms of tissue distribution, muscle specific. Selectively expressed in heart and skeletal muscle. Also expressed in the iris.

Its subcellular location is the cytoplasm. It is found in the nucleus. The protein resides in the myofibril. It localises to the sarcomere. The protein localises to the m line. Its subcellular location is the z line. The enzyme catalyses S-ubiquitinyl-[E2 ubiquitin-conjugating enzyme]-L-cysteine + [acceptor protein]-L-lysine = [E2 ubiquitin-conjugating enzyme]-L-cysteine + N(6)-ubiquitinyl-[acceptor protein]-L-lysine.. It participates in protein modification; protein ubiquitination. E3 ubiquitin ligase. Mediates the ubiquitination and subsequent proteasomal degradation of CKM, GMEB1 and HIBADH. Regulates the proteasomal degradation of muscle proteins under amino acid starvation, where muscle protein is catabolized to provide other organs with amino acids. Inhibits de novo skeletal muscle protein synthesis under amino acid starvation. Regulates proteasomal degradation of cardiac troponin I/TNNI3 and probably of other sarcomeric-associated proteins. May play a role in striated muscle atrophy and hypertrophy by regulating an anti-hypertrophic PKC-mediated signaling pathway. May regulate the organization of myofibrils through TTN in muscle cells. The polypeptide is E3 ubiquitin-protein ligase TRIM63 (TRIM63) (Homo sapiens (Human)).